We begin with the raw amino-acid sequence, 29 residues long: Vodo peptide N (29 aa).

The cyclopeptide (Gly-Asn) cross-link spans 1-29 (GLPVCGETCTLGKCYTAGCSCSWPVCYRN). 3 disulfide bridges follow: Cys5/Cys19, Cys9/Cys21, and Cys14/Cys26.

This is a cyclic peptide.

In terms of biological role, probably participates in a plant defense mechanism. This is Vodo peptide N from Viola odorata (Sweet violet).